Here is a 388-residue protein sequence, read N- to C-terminus: Succinate--CoA ligase [ADP-forming] subunit beta (388 aa).

One can recognise an ATP-grasp domain in the interval 9 to 244 (KQLFAEYGLP…PSQEDEREAH (236 aa)). ATP is bound by residues Lys-46, 53–55 (GRG), Glu-99, Ser-102, and Glu-107. Mg(2+) is bound by residues Asn-199 and Asp-213. Substrate-binding positions include Asn-264 and 321 to 323 (GIV).

It belongs to the succinate/malate CoA ligase beta subunit family. Heterotetramer of two alpha and two beta subunits. Mg(2+) serves as cofactor.

It catalyses the reaction succinate + ATP + CoA = succinyl-CoA + ADP + phosphate. The catalysed reaction is GTP + succinate + CoA = succinyl-CoA + GDP + phosphate. It participates in carbohydrate metabolism; tricarboxylic acid cycle; succinate from succinyl-CoA (ligase route): step 1/1. Its function is as follows. Succinyl-CoA synthetase functions in the citric acid cycle (TCA), coupling the hydrolysis of succinyl-CoA to the synthesis of either ATP or GTP and thus represents the only step of substrate-level phosphorylation in the TCA. The beta subunit provides nucleotide specificity of the enzyme and binds the substrate succinate, while the binding sites for coenzyme A and phosphate are found in the alpha subunit. The sequence is that of Succinate--CoA ligase [ADP-forming] subunit beta from Aliivibrio salmonicida (strain LFI1238) (Vibrio salmonicida (strain LFI1238)).